Here is a 332-residue protein sequence, read N- to C-terminus: Fructose-1,6-bisphosphatase class 1 (332 aa).

The Mg(2+) site is built by Glu-89, Asp-110, Leu-112, and Asp-113. Residues 113–116, Asn-206, Tyr-239, 257–259, and Lys-269 each bind substrate; these read DGSS and YLY. Residue Glu-275 coordinates Mg(2+).

It belongs to the FBPase class 1 family. Homotetramer. The cofactor is Mg(2+).

The protein resides in the cytoplasm. It carries out the reaction beta-D-fructose 1,6-bisphosphate + H2O = beta-D-fructose 6-phosphate + phosphate. Its pathway is carbohydrate biosynthesis; gluconeogenesis. In Citrobacter koseri (strain ATCC BAA-895 / CDC 4225-83 / SGSC4696), this protein is Fructose-1,6-bisphosphatase class 1.